The following is a 133-amino-acid chain: Fatty acid-binding protein homolog 2 (133 aa).

A fatty acid is bound by residues Arg-107 and 127-129 (RTY).

Belongs to the calycin superfamily. Fatty-acid binding protein (FABP) family.

Functionally, may play a role in the acquisition, storage, and transport of lipids, and may be important to the organism since it is incapable of synthesizing most of its lipids de novo. The sequence is that of Fatty acid-binding protein homolog 2 (FABP2) from Echinococcus granulosus (Hydatid tapeworm).